Reading from the N-terminus, the 425-residue chain is Glyco-Gag protein (425 aa).

Residues 1–54 (MSRASSGTATGARLFGISSVLGEYRVLIGDEGAGPSRSPSEVSFSVWYRSRAAR) are Cytoplasmic-facing. Residues 55 to 75 (LVIVCLVASFLVPCLTFLIAE) form a helical membrane-spanning segment. The Extracellular segment spans residues 76–425 (TVMGQTITTP…VVQGKEETPA (350 aa)). Asn-137 carries N-linked (GlcNAc...) asparagine; by host glycosylation. The disordered stretch occupies residues 174–285 (VRPFLPPPKP…LREGPNNRPQ (112 aa)). Pro residues predominate over residues 177 to 196 (FLPPPKPPTSLPQPLSPQPS). Residues 197-209 (APLTSSLYPVLPK) are compositionally biased toward low complexity. Composition is skewed to pro residues over residues 213-223 (PKPPVLPPDPS) and 233-248 (EPPPYPGGHGPPPSGP).

Glycosylated by host. In terms of processing, cleaved by host near the middle of the molecule, releasing the c-terminal half containing capsid and nucleoprotein domains op GAG.

Its subcellular location is the host cell membrane. Plays a role in viral particle release. Presumably acts by facilitating the fission of the virion bud at the cell surface. In Felidae (cat family), this protein is Glyco-Gag protein.